The chain runs to 180 residues: Anaerobic nitrite reductase GLB0 (180 aa).

Positions 23–172 constitute a Globin domain; it reads TYSKENEQLV…LAEQVKAEMH (150 aa). The Homodimerization signature appears at 56-60; that stretch reads EIAPG. S66, K80, H84, K114, T118, and H119 together coordinate heme b. The short motif at 126-138 is the Homodimerization element; the sequence is DDQFEIVKEAILY.

The protein belongs to the plant globin family. Homodimer. Heme b serves as cofactor.

It is found in the cytoplasm. The protein localises to the nucleus. It carries out the reaction Fe(III)-heme b-[protein] + nitric oxide + H2O = Fe(II)-heme b-[protein] + nitrite + 2 H(+). Phytoglobin that reduces nitrite to nitric oxide (NO) under anoxic conditions (e.g. during flooding or in waterlogged soil). May not function as an oxygen storage or transport protein. Has an unusually high affinity for O(2) through an hexacoordinate heme iron because of a very low dissociation constant. This is Anaerobic nitrite reductase GLB0 from Physcomitrium patens (Spreading-leaved earth moss).